We begin with the raw amino-acid sequence, 1255 residues long: RNA-directed RNA polymerase (1255 aa).

The RdRp catalytic domain maps to 548 to 756; it reads LIPLGLSPYA…QQRVSCGTFV (209 aa).

The protein localises to the virion. The enzyme catalyses RNA(n) + a ribonucleoside 5'-triphosphate = RNA(n+1) + diphosphate. Its function is as follows. RNA-directed RNA polymerase that is involved in transcription and genome replication. Following infection, it catalyzes the synthesis of fully conservative plus strands. After core assembly, which consists in recruitment of one capped plus-strand for each genomic segments and polymerase complexes, the polymerase switches mode and catalyzes the synthesis of complementary minus-strands. The sequence is that of RNA-directed RNA polymerase from Oryza latifolia (Indian wild rice).